Here is a 384-residue protein sequence, read N- to C-terminus: Formate dehydrogenase, chloroplastic/mitochondrial (384 aa).

Residues 1–29 (MAMRQAAKATIRACSSSSSSGYFARRQFN) constitute a chloroplast and mitochondrion transit peptide. Residues Ile-128 and Asn-152 each coordinate substrate. Residues 207–208 (RI), Asp-227, 262–266 (PLTEK), Asn-288, Asp-314, and 338–341 (HTSG) contribute to the NAD(+) site.

The protein belongs to the D-isomer specific 2-hydroxyacid dehydrogenase family. FDH subfamily. As to quaternary structure, homodimer.

It is found in the mitochondrion. Its subcellular location is the plastid. It localises to the chloroplast. It catalyses the reaction formate + NAD(+) = CO2 + NADH. Functionally, catalyzes the NAD(+)-dependent oxidation of formate to carbon dioxide. Involved in the cell stress response. The chain is Formate dehydrogenase, chloroplastic/mitochondrial (FDH1) from Arabidopsis thaliana (Mouse-ear cress).